Here is a 560-residue protein sequence, read N- to C-terminus: Membrane protein insertase YidC (560 aa).

6 helical membrane-spanning segments follow: residues 5–25 (IINLIAAIILSLSIIFGWQYF), 334–354 (AIDFGWFYIITKPVFYAMNFF), 357–377 (YVGNFGVSILIVTVIIKLLMF), 431–451 (LPILVQIPVFFSIYKVLYVTI), 476–496 (LFGLLPFSPPLFLMIGAWPIL), and 522–542 (FMPLIFLFMFSSFPVGLLIYW).

The protein belongs to the OXA1/ALB3/YidC family. Type 1 subfamily. As to quaternary structure, interacts with the Sec translocase complex via SecD. Specifically interacts with transmembrane segments of nascent integral membrane proteins during membrane integration.

Its subcellular location is the cell inner membrane. In terms of biological role, required for the insertion and/or proper folding and/or complex formation of integral membrane proteins into the membrane. Involved in integration of membrane proteins that insert both dependently and independently of the Sec translocase complex, as well as at least some lipoproteins. Aids folding of multispanning membrane proteins. The protein is Membrane protein insertase YidC of Rickettsia africae (strain ESF-5).